The sequence spans 21 residues: Serine protease inhibitor 1 (21 aa).

In terms of domain architecture, Pacifastin spans 1–21 (EQQCTPGQTKKEDCNNCTSGD). The tract at residues 1–21 (EQQCTPGQTKKEDCNNCTSGD) is disordered.

The protein belongs to the protease inhibitor I19 family. Expressed in hemolymph.

The protein resides in the secreted. In terms of biological role, probable serine protease inhibitor. The sequence is that of Serine protease inhibitor 1 from Melanoplus sanguinipes (Migratory grasshopper).